Consider the following 454-residue polypeptide: B-cell lymphoma 3 protein (454 aa).

The disordered stretch occupies residues 1–50 (MPRCPAGAMDEGPVDLRTRPKAAGLPGAALPLRKRPLRAPSPEPAAPRGA). Residues 21–31 (KAAGLPGAALP) are compositionally biased toward low complexity. S41 carries the post-translational modification Phosphoserine. ANK repeat units lie at residues 134–163 (DGDT…QGGR), 171–200 (LRQT…SPMA), 204–235 (HGQT…TLDL), 241–270 (DGLT…DIDA), 275–304 (SGRS…NVNA), 308–337 (SGSS…DSSL), and 338–367 (KNCH…RPAS). Residues 360–454 (GKATRPASTS…VPPSPAPGGS (95 aa)) are disordered. Over residues 365 to 381 (PASTSQPDPSPDRSANT) the composition is skewed to polar residues. S374 bears the Phosphoserine mark. Positions 382 to 404 (SPESSSRLSSNGLLSASPSSSPS) are enriched in low complexity. A phosphoserine; by GSK3 mark is found at S402 and S406. Pro residues predominate over residues 405–418 (QSPPRDPPGFPMAP). Over residues 432-442 (LPFAGVLRGPG) the composition is skewed to low complexity. The span at 443–454 (RPVPPSPAPGGS) shows a compositional bias: pro residues.

As to quaternary structure, component of a complex consisting of the NF-kappa-B p52-p52 homodimer and BCL3. Component of a complex consisting of the NF-kappa-B p50-p50 homodimer and BCL3. Interacts with N4BP2, COPS5 and PIR. Interacts with CYLD. In terms of processing, polyubiquitinated. Ubiquitination via 'Lys-63'-linked ubiquitin chains is required for nuclear accumulation. Deubiquitinated by CYLD, which acts on 'Lys-63'-linked ubiquitin chains. Deubiquitination by CYLD prevents nuclear accumulation. Activated by phosphorylation.

It is found in the nucleus. The protein localises to the cytoplasm. The protein resides in the perinuclear region. Contributes to the regulation of transcriptional activation of NF-kappa-B target genes. In the cytoplasm, inhibits the nuclear translocation of the NF-kappa-B p50 subunit. In the nucleus, acts as transcriptional activator that promotes transcription of NF-kappa-B target genes. Contributes to the regulation of cell proliferation. This chain is B-cell lymphoma 3 protein (BCL3), found in Homo sapiens (Human).